Reading from the N-terminus, the 276-residue chain is Probable ABC transporter permease protein PH1036 (276 aa).

6 helical membrane passes run 12–32 (IAWS…MASV), 75–95 (IVAI…AYAF), 109–129 (FIVL…YFLL), 137–157 (TFRG…IFFM), 186–206 (IVLP…FTWV), and 241–261 (GLLT…YALF). The ABC transmembrane type-1 domain maps to 70 to 261 (LKNSLIVAIP…LVPLLVYALF (192 aa)).

The protein belongs to the binding-protein-dependent transport system permease family. MalFG subfamily.

Its subcellular location is the cell membrane. Functionally, probably part of a binding-protein-dependent transport system PH1036/38/39. Probably responsible for the translocation of the substrate across the membrane. The protein is Probable ABC transporter permease protein PH1036 of Pyrococcus horikoshii (strain ATCC 700860 / DSM 12428 / JCM 9974 / NBRC 100139 / OT-3).